The primary structure comprises 270 residues: Sulfur carrier protein FdhD (270 aa).

The active-site Cysteine persulfide intermediate is Cys108. 247-252 is a binding site for Mo-bis(molybdopterin guanine dinucleotide); the sequence is FIRDGR.

This sequence belongs to the FdhD family.

Its subcellular location is the cytoplasm. In terms of biological role, required for formate dehydrogenase (FDH) activity. Acts as a sulfur carrier protein that transfers sulfur from IscS to the molybdenum cofactor prior to its insertion into FDH. This chain is Sulfur carrier protein FdhD, found in Halalkalibacterium halodurans (strain ATCC BAA-125 / DSM 18197 / FERM 7344 / JCM 9153 / C-125) (Bacillus halodurans).